Here is a 778-residue protein sequence, read N- to C-terminus: Receptor like protein 28 (778 aa).

Residues 1–24 (MSGSHLRLRFLSLLLLCCVSSSTS) form the signal peptide. Over 25-739 (SLFTFSYPVL…EEQEQVLNWK (715 aa)) the chain is Extracellular. N-linked (GlcNAc...) asparagine glycans are attached at residues N60, N72, N93, N106, N111, N147, N170, and N173. LRR repeat units lie at residues 99–123 (FHQL…EFGN), 125–147 (NKVE…SFSN), 148–171 (LSQL…VQNL), 172–195 (TNLS…LLMM), and 197–219 (FLSY…TSSK). An LRR 6; degenerate repeat occupies 220–240 (LEILYLGLKPFEGQILEPISK). LRR repeat units lie at residues 241 to 265 (LINL…LFSS), 266 to 291 (LKSL…LYIP), 293 to 313 (TLEK…ILKT), 314 to 338 (LQKL…LWRL), 340 to 363 (RLRS…VLVN), and 364 to 387 (SSME…PLSI). N-linked (GlcNAc...) asparagine glycosylation occurs at N253. Residues N348 and N363 are each glycosylated (N-linked (GlcNAc...) asparagine). The LRR 13; degenerate repeat unit spans residues 388 to 407 (KAFSAGYNNFSGEIPLSICN). N-linked (GlcNAc...) asparagine glycosylation is found at N396, N407, N420, N431, and N476. LRR repeat units lie at residues 408–429 (RSSL…PQCL), 430–453 (SNLT…LCAG), 455–477 (SLQT…LLNC), 479–500 (SLEF…WLKA), 501–525 (LPNL…HQSP), 528–552 (FPEL…YFVN), 601–625 (LNSY…IGLL), 626–649 (KELI…LANA), 650–673 (TELE…LKTL), and 678–700 (YINV…SSFE). 2 N-linked (GlcNAc...) asparagine glycosylation sites follow: N632 and N648. An N-linked (GlcNAc...) asparagine glycan is attached at N680. Residues 740–760 (AVATGYGTGLLLGLAIAQVIA) form a helical membrane-spanning segment. Topologically, residues 761–778 (SYKPDWLVKIIGLFRFCF) are cytoplasmic.

It belongs to the RLP family.

The protein resides in the cell membrane. The protein is Receptor like protein 28 of Arabidopsis thaliana (Mouse-ear cress).